Consider the following 456-residue polypeptide: Phosphomethylpyrimidine synthase (456 aa).

Substrate contacts are provided by residues Asn-80, Met-109, Tyr-139, His-175, 195 to 197 (SRG), 236 to 239 (DSLR), and Glu-275. A Zn(2+)-binding site is contributed by His-279. Tyr-302 lines the substrate pocket. His-343 provides a ligand contact to Zn(2+). [4Fe-4S] cluster is bound by residues Cys-423, Cys-426, and Cys-431.

It belongs to the ThiC family. [4Fe-4S] cluster serves as cofactor.

It catalyses the reaction 5-amino-1-(5-phospho-beta-D-ribosyl)imidazole + S-adenosyl-L-methionine = 4-amino-2-methyl-5-(phosphooxymethyl)pyrimidine + CO + 5'-deoxyadenosine + formate + L-methionine + 3 H(+). The protein operates within cofactor biosynthesis; thiamine diphosphate biosynthesis. Catalyzes the synthesis of the hydroxymethylpyrimidine phosphate (HMP-P) moiety of thiamine from aminoimidazole ribotide (AIR) in a radical S-adenosyl-L-methionine (SAM)-dependent reaction. This chain is Phosphomethylpyrimidine synthase, found in Synechococcus sp. (strain ATCC 27144 / PCC 6301 / SAUG 1402/1) (Anacystis nidulans).